The following is a 1264-amino-acid chain: Phosphatidylinositol 3,4,5-trisphosphate 5-phosphatase 2 (1264 aa).

The SH2 domain occupies 26–122 (WYHRDLSRAA…GLVCALLLPV (97 aa)). Residues 124-137 (REREPDPPDDRDVS) show a composition bias toward basic and acidic residues. Residues 124-182 (REREPDPPDDRDVSDGEDEKPPLPPRSGSTSISAPVGPGSPPAAPETPTTPAAESAPNG) form a disordered region. The residue at position 137 (Ser137) is a Phosphoserine. Over residues 169-180 (ETPTTPAAESAP) the composition is skewed to low complexity. Thr170 is subject to Phosphothreonine. Phosphoserine occurs at positions 246 and 358. Tyr892 carries the phosphotyrosine modification. Ser896 carries the post-translational modification Phosphoserine. A disordered region spans residues 903–1123 (GAKSKAPSVS…TFLGEVASGD (221 aa)). Positions 944-954 (PPPTGRPPAPP) are enriched in pro residues. Residues 950–955 (PPAPPR) carry the SH3-binding motif. The span at 957-971 (ASREEPLTPRLKAEG) shows a compositional bias: basic and acidic residues. Thr964 carries the phosphothreonine modification. Positions 989 to 992 (NPAY) match the NPXY motif motif. Tyr992 carries the post-translational modification Phosphotyrosine. 3 stretches are compositionally biased toward pro residues: residues 1002-1017 (LLPP…PVPP), 1054-1065 (LPPPDFPPPPLP), and 1093-1110 (GPPP…PGPS). At Ser1137 the chain carries Phosphoserine. The interval 1140–1178 (DYAPAGPGRSVLLPGPLELQPPRGLPSDYGRPLSFPPPR) is disordered. 2 positions are modified to phosphotyrosine: Tyr1141 and Tyr1168. The region spanning 1210–1264 (WLRAIGLERYEEGLVHNGWDDLEFLSDITEEDLEEAGVQDPAHKRLLLDTLQLSK) is the SAM domain. Phosphoserine is present on Ser1263.

Belongs to the inositol 1,4,5-trisphosphate 5-phosphatase family. Interacts with tyrosine phosphorylated form of SHC1. Interacts with EGFR. Upon stimulation by the EGF signaling pathway, it forms a complex with SHC1 and EGFR. Interacts with cytoskeletal protein SORBS3/vinexin, promoting its localization to the periphery of cells. Forms a complex with filamin (FLNA or FLNB), actin, GPIb (GP1BA or GP1BB) that regulates cortical and submembraneous actin. Interacts with c-Met/MET, when c-Met/MET is phosphorylated on 'Tyr-1356'. Interacts with p130Cas/BCAR1. Interacts with CENTD3/ARAP3 via its SAM domain. Interacts with c-Cbl/CBL and CAP/SORBS1. Interacts with activated EPHA2 receptor. Interacts with receptor FCGR2A. Interacts with receptor FCGR2B. Interacts with tyrosine kinase ABL1. Interacts with tyrosine kinase TEC. Interacts with CSF1R. Interacts (via N-terminus) with SH3YL1 (via SH3 domain). Interacts with FCRL6 (tyrosine phosphorylated form). Interacts (via SH2 domain) with tyrosine phosphorylated KLRC1 (via ITIM). Interacts with NEDD9/HEF1. In terms of processing, tyrosine phosphorylated by the members of the SRC family after exposure to a diverse array of extracellular stimuli such as insulin, growth factors such as EGF or PDGF, chemokines, integrin ligands and hypertonic and oxidative stress. May be phosphorylated upon IgG receptor FCGR2B-binding. Phosphorylated at Tyr-992 following cell attachment and spreading. Phosphorylated at Tyr-1168 following EGF signaling pathway stimulation. Phosphorylated at Thr-964 in response to PDGF.

The protein resides in the cytoplasm. Its subcellular location is the cytosol. The protein localises to the membrane. It localises to the cell projection. It is found in the filopodium. The protein resides in the lamellipodium. Its subcellular location is the basal cell membrane. The protein localises to the nucleus. It localises to the nucleus speckle. It is found in the cytoskeleton. The protein resides in the spindle pole. The catalysed reaction is a 1,2-diacyl-sn-glycero-3-phospho-(1D-myo-inositol-3,4,5-trisphosphate) + H2O = a 1,2-diacyl-sn-glycero-3-phospho-(1D-myo-inositol-3,4-bisphosphate) + phosphate. It catalyses the reaction 1,2-dioctanoyl-sn-glycero-3-phospho-(1D-myo-inositol-3,4,5-trisphosphate) + H2O = 1,2-dioctanoyl-sn-glycero-3-phospho-(1D-myo-inositol-3,4-bisphosphate) + phosphate. The enzyme catalyses 1,2-dihexadecanoyl-sn-glycero-3-phospho-(1D-myo-inositol-3,4,5-trisphosphate) + H2O = 1,2-dihexadecanoyl-sn-glycero-3-phospho-(1D-myo-inositol-3,4-bisphosphate) + phosphate. Its activity is regulated as follows. Activated upon translocation to the sites of synthesis of PtdIns(3,4,5)P3 in the membrane. Enzymatic activity is enhanced in the presence of phosphatidylserine. In terms of biological role, phosphatidylinositol (PtdIns) phosphatase that specifically hydrolyzes the 5-phosphate of phosphatidylinositol-3,4,5-trisphosphate (PtdIns(3,4,5)P3) to produce PtdIns(3,4)P2, thereby negatively regulating the PI3K (phosphoinositide 3-kinase) pathways. Required for correct mitotic spindle orientation and therefore progression of mitosis. Plays a central role in regulation of PI3K-dependent insulin signaling, although the precise molecular mechanisms and signaling pathways remain unclear. While overexpression reduces both insulin-stimulated MAP kinase and Akt activation, its absence does not affect insulin signaling or GLUT4 trafficking. Confers resistance to dietary obesity. May act by regulating AKT2, but not AKT1, phosphorylation at the plasma membrane. Part of a signaling pathway that regulates actin cytoskeleton remodeling. Required for the maintenance and dynamic remodeling of actin structures as well as in endocytosis, having a major impact on ligand-induced EGFR internalization and degradation. Participates in regulation of cortical and submembraneous actin by hydrolyzing PtdIns(3,4,5)P3 thereby regulating membrane ruffling. Regulates cell adhesion and cell spreading. Required for HGF-mediated lamellipodium formation, cell scattering and spreading. Acts as a negative regulator of EPHA2 receptor endocytosis by inhibiting via PI3K-dependent Rac1 activation. Acts as a regulator of neuritogenesis by regulating PtdIns(3,4,5)P3 level and is required to form an initial protrusive pattern, and later, maintain proper neurite outgrowth. Acts as a negative regulator of the FC-gamma-RIIA receptor (FCGR2A). Mediates signaling from the FC-gamma-RIIB receptor (FCGR2B), playing a central role in terminating signal transduction from activating immune/hematopoietic cell receptor systems. Involved in EGF signaling pathway. Upon stimulation by EGF, it is recruited by EGFR and dephosphorylates PtdIns(3,4,5)P3. Plays a negative role in regulating the PI3K-PKB pathway, possibly by inhibiting PKB activity. Down-regulates Fc-gamma-R-mediated phagocytosis in macrophages independently of INPP5D/SHIP1. In macrophages, down-regulates NF-kappa-B-dependent gene transcription by regulating macrophage colony-stimulating factor (M-CSF)-induced signaling. Plays a role in the localization of AURKA and NEDD9/HEF1 to the basolateral membrane at interphase in polarized cysts, thereby mediates cell cycle homeostasis, cell polarization and cilia assembly. Additionally promotion of cilia growth is also facilitated by hydrolysis of (PtdIns(3,4,5)P3) to PtdIns(3,4)P2. Promotes formation of apical membrane-initiation sites during the initial stages of lumen formation via Rho family-induced actin filament organization and CTNNB1 localization to cell-cell contacts. May also hydrolyze PtdIns(1,3,4,5)P4, and could thus affect the levels of the higher inositol polyphosphates like InsP6. Involved in endochondral ossification. The polypeptide is Phosphatidylinositol 3,4,5-trisphosphate 5-phosphatase 2 (Canis lupus familiaris (Dog)).